The following is a 103-amino-acid chain: Pyrimidine/purine nucleoside phosphorylase (103 aa).

It belongs to the nucleoside phosphorylase PpnP family.

The enzyme catalyses a purine D-ribonucleoside + phosphate = a purine nucleobase + alpha-D-ribose 1-phosphate. It carries out the reaction adenosine + phosphate = alpha-D-ribose 1-phosphate + adenine. The catalysed reaction is cytidine + phosphate = cytosine + alpha-D-ribose 1-phosphate. It catalyses the reaction guanosine + phosphate = alpha-D-ribose 1-phosphate + guanine. The enzyme catalyses inosine + phosphate = alpha-D-ribose 1-phosphate + hypoxanthine. It carries out the reaction thymidine + phosphate = 2-deoxy-alpha-D-ribose 1-phosphate + thymine. The catalysed reaction is uridine + phosphate = alpha-D-ribose 1-phosphate + uracil. It catalyses the reaction xanthosine + phosphate = alpha-D-ribose 1-phosphate + xanthine. Its function is as follows. Catalyzes the phosphorolysis of diverse nucleosides, yielding D-ribose 1-phosphate and the respective free bases. Can use uridine, adenosine, guanosine, cytidine, thymidine, inosine and xanthosine as substrates. Also catalyzes the reverse reactions. The polypeptide is Pyrimidine/purine nucleoside phosphorylase (Chlorobium chlorochromatii (strain CaD3)).